The following is a 443-amino-acid chain: GTPase Der (443 aa).

EngA-type G domains are found at residues 3–168 (PLLA…PEAP) and 178–353 (VHLA…RNRS). Residues 9–16 (GRPNVGKS), 56–60 (DTGGY), 120–123 (NKVE), 184–191 (GRPNVGKS), 231–235 (DTAGL), and 296–299 (NKWD) each bind GTP. Positions 354–438 (QNVSTSQLNK…PISLRFLHKN (85 aa)) constitute a KH-like domain.

The protein belongs to the TRAFAC class TrmE-Era-EngA-EngB-Septin-like GTPase superfamily. EngA (Der) GTPase family. As to quaternary structure, associates with the 50S ribosomal subunit.

Functionally, GTPase that plays an essential role in the late steps of ribosome biogenesis. This Chlorobium chlorochromatii (strain CaD3) protein is GTPase Der.